The chain runs to 472 residues: tRNA-2-methylthio-N(6)-dimethylallyladenosine synthase (472 aa).

The segment at 1 to 24 is disordered; sequence MTGTPDVFPPATPGGTPLVALPAG. The MTTase N-terminal domain occupies 33–150; that stretch reads GKLYIKTHGC…LPELIRARRE (118 aa). [4Fe-4S] cluster contacts are provided by Cys42, Cys79, Cys113, Cys187, Cys191, and Cys194. Residues 173-407 form the Radical SAM core domain; sequence RADGASAFVS…RINAHAAGIS (235 aa). The TRAM domain maps to 408 to 471; sequence EKMVGTVQTV…TNSLRARVVA (64 aa).

The protein belongs to the methylthiotransferase family. MiaB subfamily. As to quaternary structure, monomer. The cofactor is [4Fe-4S] cluster.

It is found in the cytoplasm. It catalyses the reaction N(6)-dimethylallyladenosine(37) in tRNA + (sulfur carrier)-SH + AH2 + 2 S-adenosyl-L-methionine = 2-methylsulfanyl-N(6)-dimethylallyladenosine(37) in tRNA + (sulfur carrier)-H + 5'-deoxyadenosine + L-methionine + A + S-adenosyl-L-homocysteine + 2 H(+). Functionally, catalyzes the methylthiolation of N6-(dimethylallyl)adenosine (i(6)A), leading to the formation of 2-methylthio-N6-(dimethylallyl)adenosine (ms(2)i(6)A) at position 37 in tRNAs that read codons beginning with uridine. The protein is tRNA-2-methylthio-N(6)-dimethylallyladenosine synthase of Stenotrophomonas maltophilia (strain R551-3).